The sequence spans 250 residues: Acidic endochitinase (250 aa).

A Pyrrolidone carboxylic acid modification is found at glutamine 1. Positions 1 to 36 (QNCQCDTTIYCCSQHGYCGNSYDYCGPGCQAGPCWD) constitute a Chitin-binding type-1 domain. 7 cysteine pairs are disulfide-bonded: cysteine 3–cysteine 12, cysteine 5–cysteine 18, cysteine 11–cysteine 25, cysteine 29–cysteine 34, cysteine 66–cysteine 115, cysteine 128–cysteine 136, and cysteine 218–cysteine 250. The active-site Proton donor is glutamate 110.

This sequence belongs to the glycosyl hydrolase 19 family. Chitinase class I subfamily.

It catalyses the reaction Random endo-hydrolysis of N-acetyl-beta-D-glucosaminide (1-&gt;4)-beta-linkages in chitin and chitodextrins.. In terms of biological role, defense against chitin-containing fungal pathogens. This Dioscorea japonica (Japanese yam) protein is Acidic endochitinase.